A 248-amino-acid polypeptide reads, in one-letter code: Pulmonary surfactant-associated protein A (248 aa).

Residues 1 to 20 form the signal peptide; it reads MSLGSLAFTLFLTVVAGIKC. The N-linked (GlcNAc...) asparagine glycan is linked to asparagine 21. The 73-residue stretch at 28 to 100 folds into the Collagen-like domain; sequence GSPGIPGTPG…PGERGLPGFP (73 aa). The interval 28-100 is disordered; it reads GSPGIPGTPG…PGERGLPGFP (73 aa). A 4-hydroxyproline mark is found at proline 30, proline 33, proline 36, proline 42, proline 54, proline 57, proline 63, proline 67, proline 70, and proline 76. Residues 42-51 are compositionally biased toward basic and acidic residues; the sequence is PGRDGRDGIK. Over residues 54–65 the composition is skewed to pro residues; it reads PGPPGPMGPPGG. The span at 69–82 shows a compositional bias: low complexity; sequence LPGRDGLPGAPGAP. Residues 84–93 are compositionally biased toward basic and acidic residues; sequence EHGDKGEPGE. A C-type lectin domain is found at 132-248; the sequence is LSVGDKVFST…LQYRLAICEF (117 aa). 2 disulfides stabilise this stretch: cysteine 155-cysteine 246 and cysteine 224-cysteine 238. Asparagine 207 is a glycosylation site (N-linked (GlcNAc...) asparagine). Residues glutamate 215, arginine 217, asparagine 234, and aspartate 235 each coordinate Ca(2+).

It belongs to the SFTPA family. In terms of assembly, oligomeric complex of 6 set of homotrimers.

Its subcellular location is the secreted. The protein resides in the extracellular space. It localises to the extracellular matrix. It is found in the surface film. In presence of calcium ions, it binds to surfactant phospholipids and contributes to lower the surface tension at the air-liquid interface in the alveoli of the mammalian lung and is essential for normal respiration. Enhances the expression of MYO18A/SP-R210 on alveolar macrophages. In Mus musculus (Mouse), this protein is Pulmonary surfactant-associated protein A (Sftpa1).